We begin with the raw amino-acid sequence, 208 residues long: Holliday junction resolvase RecU (208 aa).

Mg(2+) is bound by residues Thr-86, Asp-88, Glu-101, and Gln-120.

Belongs to the RecU family. Mg(2+) is required as a cofactor.

The protein resides in the cytoplasm. The catalysed reaction is Endonucleolytic cleavage at a junction such as a reciprocal single-stranded crossover between two homologous DNA duplexes (Holliday junction).. In terms of biological role, endonuclease that resolves Holliday junction intermediates in genetic recombination. Cleaves mobile four-strand junctions by introducing symmetrical nicks in paired strands. Promotes annealing of linear ssDNA with homologous dsDNA. Required for DNA repair, homologous recombination and chromosome segregation. The chain is Holliday junction resolvase RecU from Lacticaseibacillus casei (strain BL23) (Lactobacillus casei).